Consider the following 315-residue polypeptide: Phosphatidylglycerol--prolipoprotein diacylglyceryl transferase (315 aa).

A run of 2 helical transmembrane segments spans residues 19 to 39 (FTIHMYAICILIGICVAVWIL) and 93 to 113 (VWEGGMAIFGGISVGTLVAFL). Residue Arg-141 participates in a 1,2-diacyl-sn-glycero-3-phospho-(1'-sn-glycerol) binding. Helical transmembrane passes span 188–208 (LFHPTFLYEMIWNLIGAALII) and 256–276 (VWTAIIVFVLGCILFVVLYQY).

This sequence belongs to the Lgt family.

It is found in the cell membrane. It catalyses the reaction L-cysteinyl-[prolipoprotein] + a 1,2-diacyl-sn-glycero-3-phospho-(1'-sn-glycerol) = an S-1,2-diacyl-sn-glyceryl-L-cysteinyl-[prolipoprotein] + sn-glycerol 1-phosphate + H(+). Its pathway is protein modification; lipoprotein biosynthesis (diacylglyceryl transfer). Functionally, catalyzes the transfer of the diacylglyceryl group from phosphatidylglycerol to the sulfhydryl group of the N-terminal cysteine of a prolipoprotein, the first step in the formation of mature lipoproteins. The polypeptide is Phosphatidylglycerol--prolipoprotein diacylglyceryl transferase (Bifidobacterium longum (strain NCC 2705)).